A 278-amino-acid chain; its full sequence is RsbT co-antagonist protein RsbRD (278 aa).

The region spanning 160-271 (SAPIMPITDG…QSLAKALANK (112 aa)) is the STAS domain. Thr181 carries the post-translational modification Phosphothreonine.

As to quaternary structure, probably present in the stressosome with RsbRA, RsbRB, RsbRC and RsbS. Phosphorylated by RsbT.

One of 4 functionally non-identical RsbR paralogs, it functions in the environmental signaling branch of the general stress response. In terms of biological role, negative regulator of sigma-B activity. Non-phosphorylated RsbS binds to RsbT, preventing its association with RsbU. Requires any one of RsbRA, RsbRB, RsbRC or RsbRD to sequester RsbT. When RsbS and the RsbR paralog(s) are phosphorylated, they release RsbT, which can then bind and activate RsbU. This is RsbT co-antagonist protein RsbRD (rsbRD) from Bacillus subtilis (strain 168).